The chain runs to 276 residues: Casein kinase II subunit beta-3 (276 aa).

2 disordered regions span residues 1 to 22 and 34 to 86; these read MYKE…LGGA and KKLE…SEGD.

Belongs to the casein kinase 2 subunit beta family. As to quaternary structure, heterotetramer of two catalytic alpha subunits and two regulatory beta subunits. Interacts with CCA1. Interacts with LHY. In terms of processing, phosphorylated by alpha subunit.

It localises to the cytoplasm. Its subcellular location is the cytosol. The protein localises to the nucleus. In terms of biological role, plays a complex role in regulating the basal catalytic activity of the alpha subunit. The tetrameric holoenzyme CK2, composed of two alpha and two beta subunits, phosphorylates the transcription factor PIF1 after an exposure to light, resulting in a proteasome-dependent degradation of PIF1 and promotion of photomorphogenesis. CK2 phosphorylates translation initiation factors. May participate in the regulation of the initiation of translation. Stimulates the binding of CCA1 to promoters. The polypeptide is Casein kinase II subunit beta-3 (CKB3) (Arabidopsis thaliana (Mouse-ear cress)).